The sequence spans 295 residues: 4-hydroxy-tetrahydrodipicolinate synthase (295 aa).

A pyruvate-binding site is contributed by Thr-48. The Proton donor/acceptor role is filled by Tyr-135. Lys-163 serves as the catalytic Schiff-base intermediate with substrate. Val-204 lines the pyruvate pocket.

It belongs to the DapA family. Homotetramer; dimer of dimers.

Its subcellular location is the cytoplasm. It carries out the reaction L-aspartate 4-semialdehyde + pyruvate = (2S,4S)-4-hydroxy-2,3,4,5-tetrahydrodipicolinate + H2O + H(+). The protein operates within amino-acid biosynthesis; L-lysine biosynthesis via DAP pathway; (S)-tetrahydrodipicolinate from L-aspartate: step 3/4. Catalyzes the condensation of (S)-aspartate-beta-semialdehyde [(S)-ASA] and pyruvate to 4-hydroxy-tetrahydrodipicolinate (HTPA). This chain is 4-hydroxy-tetrahydrodipicolinate synthase, found in Francisella philomiragia subsp. philomiragia (strain ATCC 25017 / CCUG 19701 / FSC 153 / O#319-036).